A 265-amino-acid polypeptide reads, in one-letter code: Type 1 encapsulin shell protein (265 aa).

It belongs to the encapsulin family. Family 1 subfamily. In terms of assembly, multimeric. The encapsulin nanocompartment is formed by 60 subunits. Monomers form pentamers which assemble to form shells. There are 12 pores where the pentamers meet as well as 3-fold axis channels and dimer channels; none are larger than 3-4 Angstroms in diameter. The N-terminus of the protein is inside the shell, the C-terminus is outside. In terms of processing, the initiator methionine is partially removed. When isolated from culture filtrate isoelectric focusing gives 3 bands, none of which are glycosylated.

The protein resides in the encapsulin nanocompartment. It is found in the secreted. The protein localises to the cell membrane. Shell component of a type 1 encapsulin nanocompartment in situ; its cargo protects against oxidative stress at low pH. In situ and in E.coli assembles into proteinaceous shells about 22 nm in diameter with 2.5 nm thick walls. Cargo proteins are targeted to the interior via their C-terminal extensions; empty intact shells can be isolated in E.coli in the absence of cargo protein. There are at least 4 possible cargo proteins, DyP (encoded in the same locus), FolB, BfrB and Rv1762c; DyP and Rv1762c have been identified in vivo. Probably involved in protection against oxidative damage from the host immune response. A T-cell antigen found in bacterial culture cell filtrates, stimulates mouse immune response. Does not have detectable bacteriocin activity. In Mycobacterium tuberculosis (strain ATCC 25618 / H37Rv), this protein is Type 1 encapsulin shell protein.